Consider the following 545-residue polypeptide: MAAKEVVFGNDARVKMLAGVNILANAVKVTLGPKGRNVVLDKSFGSPLITKDGVSVAKEIELEDKFENMGAQMVKEVASKANDAAGDGTTTATVLAQAIVTEGLKAVAAGMNPMDLKRGIDKAVAAAVIELKNLSQDCADSKAIAQVGTISANSDESIGEIIATAMEKVGKEGVITVEEGQALENELDVVEGMQFDRGYLSPYFINKPETGSVELDHPFVLLVDKKISNIRELLPILEGLAKTGKPLLIVAEDVEGEALATLVVNNMRGIVKVAAVKAPGFGDRRKAMLQDVAILTGGTVIAEEIGLELEKATLEDLGTAKRVVITKDNTTIIDGNGEQAQIEARVSQIKQQIEESTSDYDKEKLQERMAKLAGGVAVIKVGAATEVEMKEKKARVEDALHATRAAVEEGVVPGGGVALVRVASKIADVEVANEDQKHGVVIALRAMEAPLRQIATNAGEEASVVANTVKNGSGNYGYNAGNDTYGDMLEMGILDPTKVTRSALQFAASIAGLMITTEAMVAELPKADAPDMGGMGGMGGMGGMM.

ATP-binding positions include 30-33 (TLGP), Lys-51, 87-91 (DGTTT), Gly-415, and Asp-495.

The protein belongs to the chaperonin (HSP60) family. In terms of assembly, forms a cylinder of 14 subunits composed of two heptameric rings stacked back-to-back. Interacts with the co-chaperonin GroES.

It localises to the cytoplasm. The enzyme catalyses ATP + H2O + a folded polypeptide = ADP + phosphate + an unfolded polypeptide.. In terms of biological role, together with its co-chaperonin GroES, plays an essential role in assisting protein folding. The GroEL-GroES system forms a nano-cage that allows encapsulation of the non-native substrate proteins and provides a physical environment optimized to promote and accelerate protein folding. The sequence is that of Chaperonin GroEL from Shewanella sp. (strain MR-7).